Reading from the N-terminus, the 557-residue chain is Urease subunit alpha (557 aa).

The Urease domain occupies 130–557 (GFIDTHIHWV…LPLTQLYFIY (428 aa)). Residues H135, H137, and K217 each coordinate Ni(2+). N6-carboxylysine is present on K217. Residue H219 coordinates substrate. 2 residues coordinate Ni(2+): H246 and H272. H320 (proton donor) is an active-site residue. D360 contributes to the Ni(2+) binding site.

Belongs to the metallo-dependent hydrolases superfamily. Urease alpha subunit family. Heterohexamer of 3 UreC (alpha) and 3 UreAB (gamma/beta) subunits. Ni cation is required as a cofactor. Carboxylation allows a single lysine to coordinate two nickel ions.

It is found in the cytoplasm. The catalysed reaction is urea + 2 H2O + H(+) = hydrogencarbonate + 2 NH4(+). It functions in the pathway nitrogen metabolism; urea degradation; CO(2) and NH(3) from urea (urease route): step 1/1. This chain is Urease subunit alpha, found in Sulfurisphaera tokodaii (strain DSM 16993 / JCM 10545 / NBRC 100140 / 7) (Sulfolobus tokodaii).